A 156-amino-acid chain; its full sequence is 3-dehydroquinate dehydratase (156 aa).

Tyr31 functions as the Proton acceptor in the catalytic mechanism. Asn83, His89, and Asp96 together coordinate substrate. Residue His109 is the Proton donor of the active site. Residues 110–111 and Arg120 each bind substrate; that span reads LS.

This sequence belongs to the type-II 3-dehydroquinase family. As to quaternary structure, homododecamer.

It carries out the reaction 3-dehydroquinate = 3-dehydroshikimate + H2O. Its pathway is metabolic intermediate biosynthesis; chorismate biosynthesis; chorismate from D-erythrose 4-phosphate and phosphoenolpyruvate: step 3/7. In terms of biological role, catalyzes a trans-dehydration via an enolate intermediate. The sequence is that of 3-dehydroquinate dehydratase from Chromobacterium violaceum (strain ATCC 12472 / DSM 30191 / JCM 1249 / CCUG 213 / NBRC 12614 / NCIMB 9131 / NCTC 9757 / MK).